A 149-amino-acid chain; its full sequence is Deoxyuridine 5'-triphosphate nucleotidohydrolase (149 aa).

Substrate-binding positions include 68–70 (RSG), N81, and 85–87 (LID).

The protein belongs to the dUTPase family. It depends on Mg(2+) as a cofactor.

It carries out the reaction dUTP + H2O = dUMP + diphosphate + H(+). It participates in pyrimidine metabolism; dUMP biosynthesis; dUMP from dCTP (dUTP route): step 2/2. This enzyme is involved in nucleotide metabolism: it produces dUMP, the immediate precursor of thymidine nucleotides and it decreases the intracellular concentration of dUTP so that uracil cannot be incorporated into DNA. In Nitrosomonas eutropha (strain DSM 101675 / C91 / Nm57), this protein is Deoxyuridine 5'-triphosphate nucleotidohydrolase.